The chain runs to 189 residues: Peptidyl-tRNA hydrolase (189 aa).

Residue Tyr17 coordinates tRNA. The active-site Proton acceptor is the His22. Phe65, Asn67, and Asn113 together coordinate tRNA.

Belongs to the PTH family. In terms of assembly, monomer.

It localises to the cytoplasm. The enzyme catalyses an N-acyl-L-alpha-aminoacyl-tRNA + H2O = an N-acyl-L-amino acid + a tRNA + H(+). Hydrolyzes ribosome-free peptidyl-tRNAs (with 1 or more amino acids incorporated), which drop off the ribosome during protein synthesis, or as a result of ribosome stalling. In terms of biological role, catalyzes the release of premature peptidyl moieties from peptidyl-tRNA molecules trapped in stalled 50S ribosomal subunits, and thus maintains levels of free tRNAs and 50S ribosomes. This Mycoplasma genitalium (strain ATCC 33530 / DSM 19775 / NCTC 10195 / G37) (Mycoplasmoides genitalium) protein is Peptidyl-tRNA hydrolase.